We begin with the raw amino-acid sequence, 687 residues long: DNA ligase (687 aa).

NAD(+) contacts are provided by residues 34–38 (DAEYD), 83–84 (SL), and Glu117. The active-site N6-AMP-lysine intermediate is Lys119. NAD(+)-binding residues include Arg140, Glu182, Lys298, and Lys322. Zn(2+)-binding residues include Cys416, Cys419, Cys434, and Cys439. The 79-residue stretch at 609 to 687 (EARGPFAGKT…EEEFVRLLKE (79 aa)) folds into the BRCT domain.

The protein belongs to the NAD-dependent DNA ligase family. LigA subfamily. The cofactor is Mg(2+). It depends on Mn(2+) as a cofactor.

The enzyme catalyses NAD(+) + (deoxyribonucleotide)n-3'-hydroxyl + 5'-phospho-(deoxyribonucleotide)m = (deoxyribonucleotide)n+m + AMP + beta-nicotinamide D-nucleotide.. DNA ligase that catalyzes the formation of phosphodiester linkages between 5'-phosphoryl and 3'-hydroxyl groups in double-stranded DNA using NAD as a coenzyme and as the energy source for the reaction. It is essential for DNA replication and repair of damaged DNA. The chain is DNA ligase from Anaeromyxobacter dehalogenans (strain 2CP-1 / ATCC BAA-258).